We begin with the raw amino-acid sequence, 256 residues long: Acetyl-coenzyme A carboxylase carboxyl transferase subunit alpha (256 aa).

In terms of domain architecture, CoA carboxyltransferase C-terminal spans 1-236 (MTDVARILKE…KEHLKTEINQ (236 aa)).

The protein belongs to the AccA family. Acetyl-CoA carboxylase is a heterohexamer composed of biotin carboxyl carrier protein (AccB), biotin carboxylase (AccC) and two subunits each of ACCase subunit alpha (AccA) and ACCase subunit beta (AccD).

It is found in the cytoplasm. The catalysed reaction is N(6)-carboxybiotinyl-L-lysyl-[protein] + acetyl-CoA = N(6)-biotinyl-L-lysyl-[protein] + malonyl-CoA. It participates in lipid metabolism; malonyl-CoA biosynthesis; malonyl-CoA from acetyl-CoA: step 1/1. In terms of biological role, component of the acetyl coenzyme A carboxylase (ACC) complex. First, biotin carboxylase catalyzes the carboxylation of biotin on its carrier protein (BCCP) and then the CO(2) group is transferred by the carboxyltransferase to acetyl-CoA to form malonyl-CoA. The polypeptide is Acetyl-coenzyme A carboxylase carboxyl transferase subunit alpha (Streptococcus uberis (strain ATCC BAA-854 / 0140J)).